The chain runs to 254 residues: Sulfoacetaldehyde reductase (254 aa).

8–32 (FITGATSGFGEAAAQVFADAGWSLV) contacts NADP(+). Residue Ser-141 coordinates substrate. The Proton acceptor role is filled by Tyr-154.

Belongs to the short-chain dehydrogenases/reductases (SDR) family. Homodimer and heterotetramer.

The enzyme catalyses 2-hydroxyethane-1-sulfonate + NADP(+) = sulfoacetaldehyde + NADPH + H(+). Its pathway is organosulfur degradation. Functionally, catalyzes the formation of isethionate from 2-sulfoacetaldehyde in the deaminative pathway of taurine. The enzyme is specific for NADPH; NADH is not a substrate. The protein is Sulfoacetaldehyde reductase (isfD) of Klebsiella oxytoca.